A 309-amino-acid chain; its full sequence is Homoserine kinase (309 aa).

91-101 (PIGSGLGSSAC) contributes to the ATP binding site.

This sequence belongs to the GHMP kinase family. Homoserine kinase subfamily.

The protein localises to the cytoplasm. The catalysed reaction is L-homoserine + ATP = O-phospho-L-homoserine + ADP + H(+). Its pathway is amino-acid biosynthesis; L-threonine biosynthesis; L-threonine from L-aspartate: step 4/5. Its function is as follows. Catalyzes the ATP-dependent phosphorylation of L-homoserine to L-homoserine phosphate. The sequence is that of Homoserine kinase from Buchnera aphidicola subsp. Acyrthosiphon pisum (strain APS) (Acyrthosiphon pisum symbiotic bacterium).